Here is a 110-residue protein sequence, read N- to C-terminus: UPF0251 protein PYRAB12660 (110 aa).

Belongs to the UPF0251 family.

In Pyrococcus abyssi (strain GE5 / Orsay), this protein is UPF0251 protein PYRAB12660.